Reading from the N-terminus, the 147-residue chain is Gastrula-specific protein 17 (147 aa).

The tract at residues 1-119 (MSQNLDFLAL…TQVYGNHQPG (119 aa)) is disordered. Polar residues-rich tracts occupy residues 20–36 (SPTS…STPP), 45–57 (RQIS…YTNP), and 74–88 (LLQN…SPTA).

The protein is Gastrula-specific protein 17 (gs17) of Xenopus laevis (African clawed frog).